Reading from the N-terminus, the 190-residue chain is Holliday junction branch migration complex subunit RuvA (190 aa).

The segment at 1–64 (MIGKLTGTLL…EDAQLLYGFG (64 aa)) is domain I. The interval 65–137 (TAQERQAFRE…LKGKLGADVG (73 aa)) is domain II. The tract at residues 137-141 (GVRAH) is flexible linker. The segment at 142-190 (AANDNQADILQALLALGYNDKEAAAALKALPADVGVSEGIKLALKSLSK) is domain III.

The protein belongs to the RuvA family. As to quaternary structure, homotetramer. Forms an RuvA(8)-RuvB(12)-Holliday junction (HJ) complex. HJ DNA is sandwiched between 2 RuvA tetramers; dsDNA enters through RuvA and exits via RuvB. An RuvB hexamer assembles on each DNA strand where it exits the tetramer. Each RuvB hexamer is contacted by two RuvA subunits (via domain III) on 2 adjacent RuvB subunits; this complex drives branch migration. In the full resolvosome a probable DNA-RuvA(4)-RuvB(12)-RuvC(2) complex forms which resolves the HJ.

The protein localises to the cytoplasm. Its function is as follows. The RuvA-RuvB-RuvC complex processes Holliday junction (HJ) DNA during genetic recombination and DNA repair, while the RuvA-RuvB complex plays an important role in the rescue of blocked DNA replication forks via replication fork reversal (RFR). RuvA specifically binds to HJ cruciform DNA, conferring on it an open structure. The RuvB hexamer acts as an ATP-dependent pump, pulling dsDNA into and through the RuvAB complex. HJ branch migration allows RuvC to scan DNA until it finds its consensus sequence, where it cleaves and resolves the cruciform DNA. This chain is Holliday junction branch migration complex subunit RuvA, found in Acidovorax sp. (strain JS42).